The following is a 426-amino-acid chain: Histidine--tRNA ligase (426 aa).

Belongs to the class-II aminoacyl-tRNA synthetase family. In terms of assembly, homodimer.

The protein resides in the cytoplasm. It catalyses the reaction tRNA(His) + L-histidine + ATP = L-histidyl-tRNA(His) + AMP + diphosphate + H(+). The protein is Histidine--tRNA ligase of Streptococcus agalactiae serotype Ia (strain ATCC 27591 / A909 / CDC SS700).